Consider the following 24-residue polypeptide: Hemocyanin subunit 4e (24 aa).

Belongs to the tyrosinase family. Hemocyanin subfamily. As to expression, hemolymph.

It is found in the secreted. It localises to the extracellular space. Functionally, hemocyanins are copper-containing oxygen carriers occurring freely dissolved in the hemolymph of many mollusks and arthropods. The sequence is that of Hemocyanin subunit 4e from Maja squinado (Mediterranean spider crab).